A 172-amino-acid polypeptide reads, in one-letter code: uncharacterized protein (172 aa).

3 helical membrane-spanning segments follow: residues isoleucine 7 to isoleucine 27, leucine 59 to phenylalanine 79, and phenylalanine 89 to lysine 109.

It to M.jannaschii MJ0695.

The protein resides in the cell membrane. This is an uncharacterized protein from Methanocaldococcus jannaschii (strain ATCC 43067 / DSM 2661 / JAL-1 / JCM 10045 / NBRC 100440) (Methanococcus jannaschii).